The sequence spans 315 residues: MHGHGGYDSDFSDDERCGESSKRKKRTVEDDLLLQKPFQKEKHGKVAHKQVAAELLDREEARNRRFHLIAMDAYQRHTKFVNDYILYYGGKKEDFKRLGENDKTDLDVIRENHRFLWNEEDEMDMTWEKRLAKKYYDKLFKEYCIADLSKYKENKFGFRWRVEKEVISGKGQFFCGNKYCDKKEGLKSWEVNFGYIEHGEKRNALVKLRLCQECSIKLNFHHRRKEIKSKKRKDKTKKDCEESSHKKSRLSSAEEASKKKDKGHSSSKKSEDSLLRNSDEEESASESELWKGPLPETDEKSQEEEFDEYFQDLFL.

Met1 is subject to N-acetylmethionine. A disordered region spans residues 1-28 (MHGHGGYDSDFSDDERCGESSKRKKRTV). Residues Ser9 and Ser12 each carry the phosphoserine modification. Lys36 carries the post-translational modification N6-acetyllysine. A compositionally biased stretch (basic residues) spans 226-235 (EIKSKKRKDK). Residues 226 to 315 (EIKSKKRKDK…FDEYFQDLFL (90 aa)) are disordered. Basic and acidic residues predominate over residues 236 to 245 (TKKDCEESSH). Residues Ser251, Ser252, Ser278, Ser283, and Ser285 each carry the phosphoserine modification. Residues 268–278 (KKSEDSLLRNS) are compositionally biased toward basic and acidic residues. Acidic residues predominate over residues 301 to 315 (SQEEEFDEYFQDLFL).

Interacts with ESS2. Ubiquitously expressed with higher expression in brain, heart, skeletal muscle, kidney and liver.

It localises to the nucleus. May be involved in pre-mRNA splicing. The sequence is that of Protein FRA10AC1 (FRA10AC1) from Homo sapiens (Human).